A 493-amino-acid chain; its full sequence is UPF0699 transmembrane protein YdbT (493 aa).

6 consecutive transmembrane segments (helical) span residues 18 to 38 (CHTI…VYIV), 46 to 66 (FYGA…SIIK), 188 to 208 (LMAA…FALI), 232 to 252 (IGIY…FSIA), 370 to 390 (VIFS…WGYL), and 393 to 413 (ILLP…AWTI).

It belongs to the UPF0699 family.

The protein localises to the cell membrane. The protein is UPF0699 transmembrane protein YdbT (ydbT) of Bacillus subtilis (strain 168).